The sequence spans 165 residues: SsrA-binding protein (165 aa).

Belongs to the SmpB family.

The protein localises to the cytoplasm. Its function is as follows. Required for rescue of stalled ribosomes mediated by trans-translation. Binds to transfer-messenger RNA (tmRNA), required for stable association of tmRNA with ribosomes. tmRNA and SmpB together mimic tRNA shape, replacing the anticodon stem-loop with SmpB. tmRNA is encoded by the ssrA gene; the 2 termini fold to resemble tRNA(Ala) and it encodes a 'tag peptide', a short internal open reading frame. During trans-translation Ala-aminoacylated tmRNA acts like a tRNA, entering the A-site of stalled ribosomes, displacing the stalled mRNA. The ribosome then switches to translate the ORF on the tmRNA; the nascent peptide is terminated with the 'tag peptide' encoded by the tmRNA and targeted for degradation. The ribosome is freed to recommence translation, which seems to be the essential function of trans-translation. The chain is SsrA-binding protein from Parvibaculum lavamentivorans (strain DS-1 / DSM 13023 / NCIMB 13966).